The chain runs to 201 residues: Ras-related protein Ral-a (201 aa).

18–25 (GSGGVGKS) serves as a coordination point for GTP. Positions 40–48 (YEPTKADSY) match the Effector region motif. Residues 65-69 (DTAGQ) and 124-127 (NKCD) contribute to the GTP site. Cys198 is subject to Cysteine methyl ester. Cys198 is lipidated: S-geranylgeranyl cysteine. Residues 199-201 (TLL) constitute a propeptide, removed in mature form.

This sequence belongs to the small GTPase superfamily. Ras family.

The protein localises to the cell membrane. The protein resides in the cleavage furrow. It localises to the midbody. It is found in the midbody ring. It catalyses the reaction GTP + H2O = GDP + phosphate + H(+). In Drosophila melanogaster (Fruit fly), this protein is Ras-related protein Ral-a (Rala).